We begin with the raw amino-acid sequence, 157 residues long: DNA gyrase inhibitor (157 aa).

This sequence belongs to the DNA gyrase inhibitor family. Interacts with DNA gyrase.

The protein localises to the cytoplasm. Its function is as follows. Inhibits the supercoiling activity of DNA gyrase. Acts by inhibiting DNA gyrase at an early step, prior to (or at the step of) binding of DNA by the gyrase. It protects cells against toxins that target DNA gyrase, by inhibiting activity of these toxins and reducing the formation of lethal double-strand breaks in the cell. The protein is DNA gyrase inhibitor of Shigella boydii serotype 18 (strain CDC 3083-94 / BS512).